The following is a 328-amino-acid chain: MAPATAVVTPQTAFKTDLPVEKTAHNTVVKSEMGALSKAYPTYSLDESFSFAPIRESTVSRAMTRRYFSDLDKYAESDIVIVGAGSAGLTAAYYIGTRRPDLKIAIIEASVAPGGGAWLGGQLFSAMVVRKPADLFLNEIGVPYEDEGDYVVVKHAALFTSTVMARTLALPNVKLFNATAVEDLIVKEGKDGKQRIAGVVTNWTLVSLNHGLQSCMDPNTINAHLVVSATGHDGPFGAFCVKRLASAQLVSNLHDMRPLDMNRAEDLIVKGTREVFPGMIVGGMELSEFDGANRMGPTFGGMMFSGIKAAQEALAIFDERKAVNEKYL.

Substrate contacts are provided by residues Ala-87, 108-109, Gly-116, and Val-181; that span reads EA. The residue at position 215 (Cys-215) is a 2,3-didehydroalanine (Cys). Substrate is bound by residues Asp-217, His-232, Met-284, and 294-296; that span reads RMG.

The protein belongs to the THI4 family. As to quaternary structure, homooctamer. Fe cation is required as a cofactor. During the catalytic reaction, a sulfide is transferred from Cys-215 to a reaction intermediate, generating a dehydroalanine residue.

Its subcellular location is the cytoplasm. The protein resides in the nucleus. The catalysed reaction is [ADP-thiazole synthase]-L-cysteine + glycine + NAD(+) = [ADP-thiazole synthase]-dehydroalanine + ADP-5-ethyl-4-methylthiazole-2-carboxylate + nicotinamide + 3 H2O + 2 H(+). In terms of biological role, involved in biosynthesis of the thiamine precursor thiazole. Catalyzes the conversion of NAD and glycine to adenosine diphosphate 5-(2-hydroxyethyl)-4-methylthiazole-2-carboxylic acid (ADT), an adenylated thiazole intermediate. The reaction includes an iron-dependent sulfide transfer from a conserved cysteine residue of the protein to a thiazole intermediate. The enzyme can only undergo a single turnover, which suggests it is a suicide enzyme. May have additional roles in adaptation to various stress conditions and in DNA damage tolerance. The chain is Thiamine thiazole synthase (thi2) from Schizosaccharomyces pombe (strain 972 / ATCC 24843) (Fission yeast).